Here is a 58-residue protein sequence, read N- to C-terminus: Large ribosomal subunit protein uL30 (58 aa).

The protein belongs to the universal ribosomal protein uL30 family. As to quaternary structure, part of the 50S ribosomal subunit.

In Cytophaga hutchinsonii (strain ATCC 33406 / DSM 1761 / CIP 103989 / NBRC 15051 / NCIMB 9469 / D465), this protein is Large ribosomal subunit protein uL30.